The primary structure comprises 363 residues: Glutamate 5-kinase (363 aa).

ATP is bound at residue K3. Substrate is bound by residues S43, D128, and N140. Residues 160–161 (TD) and 202–208 (TGGMRTK) contribute to the ATP site. Residues 267-349 (AGAILIDDGA…REIENVLGYS (83 aa)) form the PUA domain.

It belongs to the glutamate 5-kinase family.

It is found in the cytoplasm. It catalyses the reaction L-glutamate + ATP = L-glutamyl 5-phosphate + ADP. It participates in amino-acid biosynthesis; L-proline biosynthesis; L-glutamate 5-semialdehyde from L-glutamate: step 1/2. Catalyzes the transfer of a phosphate group to glutamate to form L-glutamate 5-phosphate. The polypeptide is Glutamate 5-kinase (Xanthomonas axonopodis pv. citri (strain 306)).